The primary structure comprises 141 residues: Large-conductance mechanosensitive channel (141 aa).

The next 2 membrane-spanning stretches (helical) occupy residues 21–41 and 85–105; these read VGVI…GDLI and GSFL…FMMV.

Belongs to the MscL family. Homopentamer.

The protein localises to the cell inner membrane. In terms of biological role, channel that opens in response to stretch forces in the membrane lipid bilayer. May participate in the regulation of osmotic pressure changes within the cell. The sequence is that of Large-conductance mechanosensitive channel from Dechloromonas aromatica (strain RCB).